The sequence spans 515 residues: Maturase K (515 aa).

This sequence belongs to the intron maturase 2 family. MatK subfamily.

Its subcellular location is the plastid. It localises to the chloroplast. In terms of biological role, usually encoded in the trnK tRNA gene intron. Probably assists in splicing its own and other chloroplast group II introns. This is Maturase K from Pinus banksiana (Jack pine).